Here is a 187-residue protein sequence, read N- to C-terminus: Pterin-4-alpha-carbinolamine dehydratase 2, mitochondrial (187 aa).

The N-terminal 33 residues, Met1–Phe33, are a transit peptide targeting the mitochondrion.

It belongs to the pterin-4-alpha-carbinolamine dehydratase family.

Its subcellular location is the mitochondrion. The catalysed reaction is (4aS,6R)-4a-hydroxy-L-erythro-5,6,7,8-tetrahydrobiopterin = (6R)-L-erythro-6,7-dihydrobiopterin + H2O. Functionally, involved in tetrahydrobiopterin biosynthesis. Possesses pterin-4-alpha-carbinolamine dehydratase activity when expressed in a bacterial heterolgous system. The sequence is that of Pterin-4-alpha-carbinolamine dehydratase 2, mitochondrial from Arabidopsis thaliana (Mouse-ear cress).